The chain runs to 1099 residues: Contactin-5 (1099 aa).

An N-terminal signal peptide occupies residues Met1–Ser18. Ig-like C2-type domains are found at residues Pro99–Gln190, Asn196–Ser282, Pro300–Gln385, Pro390–Lys474, Pro480–Lys569, and Pro571–Ser660. A disulfide bond links Cys123 and Cys173. N-linked (GlcNAc...) asparagine glycans are attached at residues Asn138 and Asn196. 2 cysteine pairs are disulfide-bonded: Cys217-Cys269 and Cys322-Cys369. 3 N-linked (GlcNAc...) asparagine glycosylation sites follow: Asn397, Asn449, and Asn540. 3 cysteine pairs are disulfide-bonded: Cys411/Cys458, Cys503/Cys551, and Cys593/Cys650. Fibronectin type-III domains follow at residues Pro673–Ala771, Ala776–Gly873, Ala878–His972, and Pro977–Gly1067. N-linked (GlcNAc...) asparagine glycosylation is found at Asn779, Asn816, and Asn931. The disordered stretch occupies residues Tyr958–Trp983. Asn1002 carries an N-linked (GlcNAc...) asparagine glycan. The GPI-anchor amidated serine moiety is linked to residue Ser1072. Positions Ala1073–Trp1099 are cleaved as a propeptide — removed in mature form.

The protein belongs to the immunoglobulin superfamily. Contactin family. Interacts with PTPRG. As to expression, specifically expressed in the nervous system. Expressed in cerebrum and cerebellum but at low level in spinal cord. In brain, it is expressed in highly restricted regions at postnatal day 7, such as the auditory pathway, including the cochlear nucleus, superior olive, inferior colliculus, medial geniculate nucleus and auditory cortex. Expressed in the accessory olfactory bulb, glomerular and mitral cell layers in the olfactory bulb, anterior thalamic nuclei, layers II-IV of the cerebral cortex, dentate gyrus of the hippocampus and external granule cells and Purkinje cells of the cerebellum. Also expressed in the piriform cortex, inferior olive and facial nucleus. Weakly or not expressed in other parts of the brain.

Its subcellular location is the cell membrane. Its function is as follows. Contactins mediate cell surface interactions during nervous system development. Has some neurite outgrowth-promoting activity in the cerebral cortical neurons but not in hippocampal neurons. Probably involved in neuronal activity in the auditory system. The protein is Contactin-5 (Cntn5) of Rattus norvegicus (Rat).